The primary structure comprises 307 residues: UDP-N-acetylenolpyruvoylglucosamine reductase (307 aa).

Residues 29–197 (RVGGPAEWFA…LSARFRLDPG (169 aa)) form the FAD-binding PCMH-type domain. Arg176 is an active-site residue. Ser227 (proton donor) is an active-site residue. Glu297 is a catalytic residue.

It belongs to the MurB family. FAD serves as cofactor.

The protein localises to the cytoplasm. The enzyme catalyses UDP-N-acetyl-alpha-D-muramate + NADP(+) = UDP-N-acetyl-3-O-(1-carboxyvinyl)-alpha-D-glucosamine + NADPH + H(+). It functions in the pathway cell wall biogenesis; peptidoglycan biosynthesis. In terms of biological role, cell wall formation. This is UDP-N-acetylenolpyruvoylglucosamine reductase from Prochlorococcus marinus (strain MIT 9313).